The sequence spans 390 residues: Isoaspartyl dipeptidase (390 aa).

The Zn(2+) site is built by H68 and H70. Residues 75–77 (GGE), T106, and Y137 each bind substrate. K162 is a binding site for Zn(2+). Residue K162 is modified to N6-carboxylysine. Position 169 (R169) interacts with substrate. Zn(2+)-binding residues include H201 and H230. Substrate is bound at residue R233. Residue D285 coordinates Zn(2+). The active-site Proton acceptor is the D285. Residue S289 participates in substrate binding.

Belongs to the peptidase M38 family. Zn(2+) serves as cofactor. The cofactor is Co(2+). In terms of processing, carboxylation allows a single lysine to coordinate two zinc ions.

The protein resides in the cytoplasm. P-hydroxymercuribenzoate causes a slight inhibition (8 to 17 %). Iodoacetamide, o-iodosobenzoate and ammonium persulfate do not inhibit the enzyme activity. Catalyzes the hydrolytic cleavage of a subset of L-isoaspartyl (L-beta-aspartyl) dipeptides. Used to degrade proteins damaged by L-isoaspartyl residues formation. The best substrate for the enzyme reported thus far is iso-Asp-Leu. The protein is Isoaspartyl dipeptidase (iadA) of Escherichia coli (strain K12).